The following is a 114-amino-acid chain: MKKHTLALGLISALFFSFQAHADLSRTSKGALLGAGVGLLSGNGVNGVLKGAAVGAGVGAVTEKGKDGKKARKGAKVGATLGAVAGVLTGNGLEGAIKGAVIGGAGGAIVGKMN.

Belongs to the UPF0757 family.

In Escherichia fergusonii (strain ATCC 35469 / DSM 13698 / CCUG 18766 / IAM 14443 / JCM 21226 / LMG 7866 / NBRC 102419 / NCTC 12128 / CDC 0568-73), this protein is UPF0757 protein YmgG.